The chain runs to 943 residues: MTDYKATLNLPDTAFPMKAGLPQREPQILQRWNSIGLYGKLREIGKDRPKFVLHDGPPYANGTIHIGHALNKILKDMILRSKTLSGFDAPYVPGWDCHGLPIEHKVEVTYGKNLGADKTRELCRAYATEQIEGQKSEFIRLGVLGEWDNPYKTMNFKNEAGEIRALAEIVKGGFVFKGLKPVNWCFDCGSALAEAEVEYEDKKSSTIDVAFPIADDAKLAEAFGLASLAKPAAIVIWTTTPWTIPANQALNVHPEFTYALVDVGDRLLVLAEEMVESCLARYELQGSVIATATGSALELINFRHPFYDRLSPVYLADYVELGSGTGIVHCSPAYGVDDFVICKKYGMVNDDIINPVQSNGVYVPSLEFFGGQFIFKADQPIIEKLREVGALMQTAAIQHSYMHCWRHKTPLIYRATAQWFIGMDKEPTSGDTLRVRSLKAIEDTKFVPSWGQARLHSMIANRPDWCISRQRNWGVPIPFFLNKESGELHPRTVELMEVVAQRVEQQGIEAWFKLDAAELLGDEAPLYDKISDTLDVWFDSGTTHWHVLRGSHPMGHETGPRADLYLEGSDQHRGWFHSSLLTGCAIDNHAPYRELLTHGFTVDETGRKMSKSLKNVIEPKKINDTLGADIMRLWVASTDYSGEIAVSDQILARSADAYRRIRNTARFMLSNLTGFNPASDLLPAEDMLALDRWAVDRTLLLQRELQEHYGEYRFWNVYSKIHNFCVQELGGFYLDIIKDRQYTTGANSKARRSAQTALYHISEALVRWIAPILAFTADELWEYLPGERNESVMLNTWYEGLTELPADFELGREYWEGVMAVKVAVNKELEVQRAAKAVGGNLQAEVTLFAEDGLTADLAKLSNELRFVLITSTASLAPFTQAPADAVATEVPGLKLKVVKSAFPKCARCWHCREDVGVNPEHPEICGRCVDNISGEGEVRHYA.

A 'HIGH' region motif is present at residues 58–68 (PYANGTIHIGH). Position 567 (Glu-567) interacts with L-isoleucyl-5'-AMP. The 'KMSKS' region motif lies at 608 to 612 (KMSKS). Lys-611 is a binding site for ATP. The Zn(2+) site is built by Cys-906, Cys-909, Cys-926, and Cys-929.

This sequence belongs to the class-I aminoacyl-tRNA synthetase family. IleS type 1 subfamily. Monomer. Requires Zn(2+) as cofactor.

It is found in the cytoplasm. The catalysed reaction is tRNA(Ile) + L-isoleucine + ATP = L-isoleucyl-tRNA(Ile) + AMP + diphosphate. In terms of biological role, catalyzes the attachment of isoleucine to tRNA(Ile). As IleRS can inadvertently accommodate and process structurally similar amino acids such as valine, to avoid such errors it has two additional distinct tRNA(Ile)-dependent editing activities. One activity is designated as 'pretransfer' editing and involves the hydrolysis of activated Val-AMP. The other activity is designated 'posttransfer' editing and involves deacylation of mischarged Val-tRNA(Ile). Functionally, confers resistance to the antibiotic mupirocin (pseudomonic acid A), an Ile-analog produced by P.fluorescens NCIMB 10586 itself that competitively inhibits activation by Ile-tRNA synthetase, thus inhibiting protein biosynthesis. In Pseudomonas fluorescens, this protein is Isoleucine--tRNA ligase 1 (ileS1).